Reading from the N-terminus, the 298-residue chain is L-xylulose reductase (298 aa).

Ile19, Asp68, and Asn103 together coordinate NADP(+). Catalysis depends on proton donor residues Ser161, Ser162, and Tyr175. Residues Tyr175, Lys179, and Val207 each contribute to the NADP(+) site. Lys179 functions as the Lowers pKa of active site Tyr in the catalytic mechanism.

This sequence belongs to the short-chain dehydrogenases/reductases (SDR) family.

The enzyme catalyses xylitol + NADP(+) = L-xylulose + NADPH + H(+). Its pathway is carbohydrate degradation; L-arabinose degradation via L-arabinitol; D-xylulose 5-phosphate from L-arabinose (fungal route): step 3/5. Its function is as follows. L-xylulose reductase involved in the catabolism of L-arabinose through an oxidoreductive pathway. Catalyzes the NADPH-dependent reduction of L-xylulose. The sequence is that of L-xylulose reductase from Aspergillus niger (strain ATCC 1015 / CBS 113.46 / FGSC A1144 / LSHB Ac4 / NCTC 3858a / NRRL 328 / USDA 3528.7).